Reading from the N-terminus, the 80-residue chain is U20-ctenitoxin-Pn1a (80 aa).

7 cysteine pairs are disulfide-bonded: cysteine 3/cysteine 20, cysteine 10/cysteine 26, cysteine 17/cysteine 52, cysteine 19/cysteine 40, cysteine 28/cysteine 38, cysteine 58/cysteine 71, and cysteine 75/cysteine 80.

As to expression, expressed by the venom gland.

It localises to the secreted. Its function is as follows. Omega-agatoxin are antagonists of voltage-gated calcium channels (Cav). Induces rapid general flaccid paralysis followed by death when injected into the cerebral ventricle of mice at dose levels of 3 ug per mouse. This Phoneutria nigriventer (Brazilian armed spider) protein is U20-ctenitoxin-Pn1a.